The sequence spans 293 residues: Acetyl-coenzyme A carboxylase carboxyl transferase subunit beta (293 aa).

In terms of domain architecture, CoA carboxyltransferase N-terminal spans 29 to 293 (LWVKCPECGQ…GCKAKKAAGK (265 aa)). Cys33, Cys36, Cys52, and Cys55 together coordinate Zn(2+). Residues 33–55 (CPECGQVVYRKDLHANASVCSNC) form a C4-type zinc finger.

It belongs to the AccD/PCCB family. In terms of assembly, acetyl-CoA carboxylase is a heterohexamer composed of biotin carboxyl carrier protein (AccB), biotin carboxylase (AccC) and two subunits each of ACCase subunit alpha (AccA) and ACCase subunit beta (AccD). The cofactor is Zn(2+).

It is found in the cytoplasm. It carries out the reaction N(6)-carboxybiotinyl-L-lysyl-[protein] + acetyl-CoA = N(6)-biotinyl-L-lysyl-[protein] + malonyl-CoA. The protein operates within lipid metabolism; malonyl-CoA biosynthesis; malonyl-CoA from acetyl-CoA: step 1/1. Functionally, component of the acetyl coenzyme A carboxylase (ACC) complex. Biotin carboxylase (BC) catalyzes the carboxylation of biotin on its carrier protein (BCCP) and then the CO(2) group is transferred by the transcarboxylase to acetyl-CoA to form malonyl-CoA. In Prochlorococcus marinus (strain MIT 9303), this protein is Acetyl-coenzyme A carboxylase carboxyl transferase subunit beta.